A 316-amino-acid chain; its full sequence is tRNA methyltransferase 10 homolog B (316 aa).

Residues 73 to 98 (EKIVAAKKSKRKQEKERRKANRVENS) are a coiled coil. The disordered stretch occupies residues 77–96 (AAKKSKRKQEKERRKANRVE). The region spanning 113 to 310 (IKERLLEAKH…KGVSSRKGYV (198 aa)) is the SAM-dependent MTase TRM10-type domain.

The protein belongs to the class IV-like SAM-binding methyltransferase superfamily. TRM10 family.

It carries out the reaction guanosine(9) in tRNA + S-adenosyl-L-methionine = N(1)-methylguanosine(9) in tRNA + S-adenosyl-L-homocysteine + H(+). S-adenosyl-L-methionine-dependent guanine N(1)-methyltransferase that catalyzes the formation of N(1)-methylguanine at position 9 (m1G9) in tRNAs. Probably not able to catalyze formation of N(1)-methyladenine at position 9 (m1A9) in tRNAs. The protein is tRNA methyltransferase 10 homolog B (TRMT10B) of Bos taurus (Bovine).